The chain runs to 545 residues: CTP synthase (545 aa).

Residues 1–266 (MTTRYIFVTG…DDLVIKRFNL (266 aa)) form an amidoligase domain region. Ser-14 serves as a coordination point for CTP. Ser-14 provides a ligand contact to UTP. ATP-binding positions include 15 to 20 (SLGKGI) and Asp-72. Residues Asp-72 and Glu-140 each coordinate Mg(2+). Residues 147–149 (DIE), 187–192 (KTKPTQ), and Lys-223 contribute to the CTP site. Residues 187–192 (KTKPTQ) and Lys-223 contribute to the UTP site. 239–241 (KDV) is an ATP binding site. Residues 291-542 (TIGMVGKYIE…IAASYAYQKR (252 aa)) enclose the Glutamine amidotransferase type-1 domain. Gly-352 serves as a coordination point for L-glutamine. Cys-379 functions as the Nucleophile; for glutamine hydrolysis in the catalytic mechanism. L-glutamine-binding positions include 380 to 383 (LGMQ), Glu-403, and Arg-470. Residues His-515 and Glu-517 contribute to the active site.

The protein belongs to the CTP synthase family. In terms of assembly, homotetramer.

The catalysed reaction is UTP + L-glutamine + ATP + H2O = CTP + L-glutamate + ADP + phosphate + 2 H(+). The enzyme catalyses L-glutamine + H2O = L-glutamate + NH4(+). It carries out the reaction UTP + NH4(+) + ATP = CTP + ADP + phosphate + 2 H(+). It functions in the pathway pyrimidine metabolism; CTP biosynthesis via de novo pathway; CTP from UDP: step 2/2. Allosterically activated by GTP, when glutamine is the substrate; GTP has no effect on the reaction when ammonia is the substrate. The allosteric effector GTP functions by stabilizing the protein conformation that binds the tetrahedral intermediate(s) formed during glutamine hydrolysis. Inhibited by the product CTP, via allosteric rather than competitive inhibition. Catalyzes the ATP-dependent amination of UTP to CTP with either L-glutamine or ammonia as the source of nitrogen. Regulates intracellular CTP levels through interactions with the four ribonucleotide triphosphates. This Shewanella frigidimarina (strain NCIMB 400) protein is CTP synthase.